The following is a 215-amino-acid chain: Pyrrolidone-carboxylate peptidase (215 aa).

Residues Glu-80, Cys-143, and His-167 contribute to the active site.

It belongs to the peptidase C15 family. In terms of assembly, homotetramer.

The protein localises to the cytoplasm. The catalysed reaction is Release of an N-terminal pyroglutamyl group from a polypeptide, the second amino acid generally not being Pro.. Removes 5-oxoproline from various penultimate amino acid residues except L-proline. The sequence is that of Pyrrolidone-carboxylate peptidase from Yersinia pseudotuberculosis serotype O:1b (strain IP 31758).